A 295-amino-acid polypeptide reads, in one-letter code: Fructose-bisphosphate aldolase class 1 (295 aa).

Catalysis depends on Glu-176, which acts as the Proton acceptor. Catalysis depends on Lys-213, which acts as the Schiff-base intermediate with dihydroxyacetone-P.

The protein belongs to the class I fructose-bisphosphate aldolase family.

It carries out the reaction beta-D-fructose 1,6-bisphosphate = D-glyceraldehyde 3-phosphate + dihydroxyacetone phosphate. Its pathway is carbohydrate degradation; glycolysis; D-glyceraldehyde 3-phosphate and glycerone phosphate from D-glucose: step 4/4. The chain is Fructose-bisphosphate aldolase class 1 from Fusobacterium nucleatum subsp. nucleatum (strain ATCC 25586 / DSM 15643 / BCRC 10681 / CIP 101130 / JCM 8532 / KCTC 2640 / LMG 13131 / VPI 4355).